We begin with the raw amino-acid sequence, 189 residues long: Leucine repeat adapter protein 25 (189 aa).

Serine 28 is subject to Phosphoserine. Residues 55-81 form a disordered region; sequence LSRAARAPDGPRHAAGSANLGSAAGPR. The segment covering 68–79 has biased composition (low complexity); the sequence is AAGSANLGSAAG. An LRR repeat occupies 86–114; it reads LDSALAALRKEMVGLRQLDMSLLCQLWGL. The segment at 141-174 is disordered; it reads DSSYPPDAGLSDDDEPPDASLPPDPPPLTVPQTH. Pro residues predominate over residues 159–169; the sequence is ASLPPDPPPLT. Serine 188 is modified (phosphoserine).

It belongs to the FAM89 family. Interacts with SKI. Interacts (via LRR repeat) with CDC42BPA (via AGC-kinase C-terminal domain) and CDC42BPB (via AGC-kinase C-terminal domain). Interacts (via LRR repeat) with LIMK1 (via LIM zinc-binding domains). Forms a tripartite complex with CDC42BPA, CDC42BPB and LIMK1.

It is found in the cytoplasm. It localises to the cell projection. The protein localises to the lamellipodium. Its function is as follows. Negatively regulates TGF-beta-induced signaling; in cooperation with SKI prevents the translocation of SMAD2 from the nucleus to the cytoplasm in response to TGF-beta. Acts as an adapter that mediates the specific recognition of LIMK1 by CDC42BPA and CDC42BPB in the lamellipodia. LRAP25-mediated CDC42BPA/CDC42BPB targeting to LIMK1 and the lamellipodium results in LIMK1 activation and the subsequent phosphorylation of CFL1 which is important for lamellipodial F-actin regulation. This chain is Leucine repeat adapter protein 25, found in Rattus norvegicus (Rat).